The sequence spans 513 residues: 2,3-bisphosphoglycerate-independent phosphoglycerate mutase (513 aa).

2 residues coordinate Mn(2+): Asp14 and Ser64. Residue Ser64 is the Phosphoserine intermediate of the active site. Residues His125, 155-156 (RD), Arg187, Arg193, 259-262 (RADR), and Lys333 contribute to the substrate site. Mn(2+) contacts are provided by Asp400, His404, Asp441, His442, and His460.

The protein belongs to the BPG-independent phosphoglycerate mutase family. As to quaternary structure, monomer. Requires Mn(2+) as cofactor.

The catalysed reaction is (2R)-2-phosphoglycerate = (2R)-3-phosphoglycerate. It participates in carbohydrate degradation; glycolysis; pyruvate from D-glyceraldehyde 3-phosphate: step 3/5. Catalyzes the interconversion of 2-phosphoglycerate and 3-phosphoglycerate. The polypeptide is 2,3-bisphosphoglycerate-independent phosphoglycerate mutase (Pseudomonas fluorescens (strain ATCC BAA-477 / NRRL B-23932 / Pf-5)).